A 702-amino-acid chain; its full sequence is Serotransferrin-A (702 aa).

Residues 1–19 form the signal peptide; the sequence is MDLSLRVALCLSMLALCLA. 2 Transferrin-like domains span residues 26–340 and 353–685; these read VRWC…ALKE and VRWC…SLNK. 2 disulfides stabilise this stretch: cysteine 29–cysteine 64 and cysteine 39–cysteine 55. 2 residues coordinate Fe(3+): aspartate 79 and tyrosine 111. Disulfide bonds link cysteine 134/cysteine 217, cysteine 179/cysteine 192, and cysteine 245/cysteine 259. Hydrogencarbonate contacts are provided by threonine 136, lysine 140, alanine 142, and glycine 143. Tyrosine 211 contributes to the Fe(3+) binding site. Fe(3+) is bound at residue histidine 267. Positions 340-349 are connecting region; that stretch reads EGVKEDDSAA. 2 disulfides stabilise this stretch: cysteine 356/cysteine 388 and cysteine 366/cysteine 379. Fe(3+)-binding residues include aspartate 403 and tyrosine 442. Intrachain disulfides connect cysteine 413–cysteine 697, cysteine 431–cysteine 658, cysteine 465–cysteine 544, cysteine 489–cysteine 686, cysteine 499–cysteine 513, cysteine 510–cysteine 527, and cysteine 584–cysteine 598. Positions 467, 471, 473, and 474 each coordinate hydrogencarbonate. Position 538 (tyrosine 538) interacts with Fe(3+). Residue histidine 606 participates in Fe(3+) binding.

Belongs to the transferrin family. Monomer. Plasma.

The protein resides in the secreted. In terms of biological role, transferrins are iron binding transport proteins which can bind two Fe(3+) ions in association with the binding of an anion, usually bicarbonate. It is responsible for the transport of iron from sites of absorption and heme degradation to those of storage and utilization. Serum transferrin may also have a further role in stimulating cell proliferation. The polypeptide is Serotransferrin-A (tf-a) (Xenopus laevis (African clawed frog)).